The chain runs to 470 residues: Uronate isomerase (470 aa).

Belongs to the metallo-dependent hydrolases superfamily. Uronate isomerase family.

The enzyme catalyses D-glucuronate = D-fructuronate. The catalysed reaction is aldehydo-D-galacturonate = keto-D-tagaturonate. The protein operates within carbohydrate metabolism; pentose and glucuronate interconversion. The protein is Uronate isomerase of Escherichia coli O17:K52:H18 (strain UMN026 / ExPEC).